The primary structure comprises 138 residues: UPF0355 protein SSP2326 (138 aa).

Residues 115–138 (NVAFETNQTKSNSHYSEETNGPKS) form a disordered region. Residues 118–138 (FETNQTKSNSHYSEETNGPKS) are compositionally biased toward polar residues.

The protein belongs to the UPF0355 family.

The chain is UPF0355 protein SSP2326 from Staphylococcus saprophyticus subsp. saprophyticus (strain ATCC 15305 / DSM 20229 / NCIMB 8711 / NCTC 7292 / S-41).